The chain runs to 248 residues: DNA repair protein RecO (248 aa).

This sequence belongs to the RecO family.

Functionally, involved in DNA repair and RecF pathway recombination. The polypeptide is DNA repair protein RecO (Bacillus cereus (strain B4264)).